A 245-amino-acid chain; its full sequence is 1-(5-phosphoribosyl)-5-[(5-phosphoribosylamino)methylideneamino] imidazole-4-carboxamide isomerase (245 aa).

Catalysis depends on Asp7, which acts as the Proton acceptor. The Proton donor role is filled by Asp129.

It belongs to the HisA/HisF family.

Its subcellular location is the cytoplasm. The catalysed reaction is 1-(5-phospho-beta-D-ribosyl)-5-[(5-phospho-beta-D-ribosylamino)methylideneamino]imidazole-4-carboxamide = 5-[(5-phospho-1-deoxy-D-ribulos-1-ylimino)methylamino]-1-(5-phospho-beta-D-ribosyl)imidazole-4-carboxamide. The protein operates within amino-acid biosynthesis; L-histidine biosynthesis; L-histidine from 5-phospho-alpha-D-ribose 1-diphosphate: step 4/9. This is 1-(5-phosphoribosyl)-5-[(5-phosphoribosylamino)methylideneamino] imidazole-4-carboxamide isomerase from Citrobacter koseri (strain ATCC BAA-895 / CDC 4225-83 / SGSC4696).